Reading from the N-terminus, the 403-residue chain is Phosphoglycerate kinase (403 aa).

Substrate is bound by residues 21-23 (DFN), Arg36, 59-62 (HLGR), Arg119, and Arg154. Residues Lys207, Gly299, Glu330, and 357 to 360 (GGDA) each bind ATP.

The protein belongs to the phosphoglycerate kinase family. Monomer.

Its subcellular location is the cytoplasm. The enzyme catalyses (2R)-3-phosphoglycerate + ATP = (2R)-3-phospho-glyceroyl phosphate + ADP. It functions in the pathway carbohydrate degradation; glycolysis; pyruvate from D-glyceraldehyde 3-phosphate: step 2/5. This Chlamydia muridarum (strain MoPn / Nigg) protein is Phosphoglycerate kinase (pgk).